The following is a 473-amino-acid chain: BPI fold-containing family B member 3 (473 aa).

The N-terminal stretch at 1 to 20 (MMLGVYTLLLLWGLATPCLG) is a signal peptide. A glycan (N-linked (GlcNAc...) asparagine) is linked at Asn139. Cys161 and Cys196 form a disulfide bridge.

It belongs to the BPI/LBP/Plunc superfamily. BPI/LBP family.

The protein resides in the secreted. In terms of biological role, may have the capacity to recognize and bind specific classes of odorants. May act as a carrier molecule, transporting odorants across the mucus layer to access receptor sites. May serve as a primary defense mechanism by recognizing and removing potentially harmful odorants or pathogenic microorganisms from the mucosa or clearing excess odorant from mucus to enable new odorant stimuli to be received. In Mus musculus (Mouse), this protein is BPI fold-containing family B member 3.